Consider the following 211-residue polypeptide: DNA dC-&gt;dU-editing enzyme APOBEC-3H (211 aa).

One can recognise a CMP/dCMP-type deaminase domain in the interval 4–126 (LTAKTFSLQF…RRQQEGLRLL (123 aa)). His-54 lines the Zn(2+) pocket. The active-site Proton donor is Glu-56. The Zn(2+) site is built by Cys-85 and Cys-88.

The protein belongs to the cytidine and deoxycytidylate deaminase family. In terms of assembly, homodimer. Zn(2+) serves as cofactor.

It localises to the cytoplasm. It carries out the reaction a 2'-deoxycytidine in single-stranded DNA + H2O + H(+) = a 2'-deoxyuridine in single-stranded DNA + NH4(+). Functionally, DNA deaminase (cytidine deaminase) which may act as an inhibitor of retrovirus replication and retrotransposon mobility via deaminase-dependent and -independent mechanisms. This chain is DNA dC-&gt;dU-editing enzyme APOBEC-3H, found in Pongo pygmaeus (Bornean orangutan).